Here is a 254-residue protein sequence, read N- to C-terminus: Fructose-1,6-bisphosphatase (254 aa).

Residues E68, D84, L86, and D87 each contribute to the Mg(2+) site. Substrate contacts are provided by residues 87-89, R171, I176, and R195; that span reads DGS. D202 is a binding site for Mg(2+).

This sequence belongs to the inositol monophosphatase superfamily. FBPase class 4 family. Homodimer. Requires Mg(2+) as cofactor.

The enzyme catalyses beta-D-fructose 1,6-bisphosphate + H2O = beta-D-fructose 6-phosphate + phosphate. With respect to regulation, inhibited by Li(+), ADP, ATP and glucose-6-phosphate. Functionally, catalyzes the conversion of D-fructose 1,6-bisphosphate to D-fructose 6-phosphate. In vitro, also has weak activity with inositol-1-phosphate, glucose-1-phosphate and glycerol-2-phosphate. The sequence is that of Fructose-1,6-bisphosphatase from Pyrococcus furiosus (strain ATCC 43587 / DSM 3638 / JCM 8422 / Vc1).